The chain runs to 578 residues: Trehalase (578 aa).

The N-terminal stretch at 1 to 19 (MPGSTWELHLLLLLGLGLG) is a signal peptide. Asn-78 carries N-linked (GlcNAc...) asparagine glycosylation. Substrate contacts are provided by residues Arg-168, 175-176 (WD), Asn-212, and 221-223 (RSQ). Asn-261 is a glycosylation site (N-linked (GlcNAc...) asparagine). Residues 286–288 (RPE) and Gly-319 each bind substrate. Asp-321 functions as the Proton donor/acceptor in the catalytic mechanism. N-linked (GlcNAc...) asparagine glycosylation is present at Asn-369. Glu-514 functions as the Proton donor/acceptor in the catalytic mechanism. Residue Glu-528 coordinates substrate. Ser-555 is lipidated: GPI-anchor amidated serine. Residues 556 to 578 (GTQLALLEPHCLAAALLLSFLTR) constitute a propeptide, removed in mature form.

Belongs to the glycosyl hydrolase 37 family. In terms of assembly, homodimer; disulfide-linked. Expressed in small intestine, kidney, and to a lesser extent in liver.

Its subcellular location is the cell membrane. The catalysed reaction is alpha,alpha-trehalose + H2O = alpha-D-glucose + beta-D-glucose. Intestinal trehalase is probably involved in the hydrolysis of ingested trehalose. This chain is Trehalase (TREH), found in Oryctolagus cuniculus (Rabbit).